Here is a 382-residue protein sequence, read N- to C-terminus: S-adenosylmethionine synthase (382 aa).

Residue Glu10 coordinates Mg(2+). An ATP-binding site is contributed by His16. A K(+)-binding site is contributed by Glu44. Residues Glu57 and Gln100 each contribute to the L-methionine site. ATP-binding positions include 166-168 (DTK), 234-237 (SGRF), Asp245, 251-252 (RK), Ala268, Lys272, and Lys276. Residue Asp245 coordinates L-methionine. Lys276 is a binding site for L-methionine.

It belongs to the AdoMet synthase family. The cofactor is Mg(2+). K(+) is required as a cofactor.

It carries out the reaction L-methionine + ATP + H2O = S-adenosyl-L-methionine + phosphate + diphosphate. It participates in amino-acid biosynthesis; S-adenosyl-L-methionine biosynthesis; S-adenosyl-L-methionine from L-methionine: step 1/1. Functionally, catalyzes the formation of S-adenosylmethionine from methionine and ATP. The reaction comprises two steps that are both catalyzed by the same enzyme: formation of S-adenosylmethionine (AdoMet) and triphosphate, and subsequent hydrolysis of the triphosphate. The protein is S-adenosylmethionine synthase (sam1) of Schizosaccharomyces pombe (strain 972 / ATCC 24843) (Fission yeast).